Reading from the N-terminus, the 626-residue chain is tRNA uridine 5-carboxymethylaminomethyl modification enzyme MnmG (626 aa).

An FAD-binding site is contributed by 14-19 (GAGHAG). Residue 273-287 (GPRYCPSIEDKVVRF) participates in NAD(+) binding.

This sequence belongs to the MnmG family. As to quaternary structure, homodimer. Heterotetramer of two MnmE and two MnmG subunits. The cofactor is FAD.

The protein resides in the cytoplasm. NAD-binding protein involved in the addition of a carboxymethylaminomethyl (cmnm) group at the wobble position (U34) of certain tRNAs, forming tRNA-cmnm(5)s(2)U34. This chain is tRNA uridine 5-carboxymethylaminomethyl modification enzyme MnmG, found in Caldicellulosiruptor saccharolyticus (strain ATCC 43494 / DSM 8903 / Tp8T 6331).